The sequence spans 218 residues: Capsid protein (218 aa).

Methionine 1 is modified (N-acetylmethionine; by host). The segment covering 1–10 (MDKSESTSAG) has biased composition (low complexity). The tract at residues 1-29 (MDKSESTSAGRNRRRRPRRGSRSASSSAD) is disordered. Basic residues predominate over residues 11 to 21 (RNRRRRPRRGS).

This sequence belongs to the cucumovirus capsid protein family.

The protein localises to the virion. Capsid protein. Probably binds RNA and plays a role in packaging. The polypeptide is Capsid protein (Cucumis sativus (Cucumber)).